The sequence spans 479 residues: Nuclear receptor subfamily 6 group A member 1 (479 aa).

The segment at 1 to 32 (MERDERPPSGGGGGGGSAGFLEPPAALPPPPR) is disordered. Positions 9-18 (SGGGGGGGSA) are enriched in gly residues. Positions 57–132 (QRTCLICGDR…MGMNRKAIRE (76 aa)) form a DNA-binding region, nuclear receptor. Cys-60, Cys-63, Cys-77, Cys-80, Cys-96, Cys-102, Cys-112, and Cys-115 together coordinate Zn(2+). NR C4-type zinc fingers lie at residues 60-80 (CLIC…CEGC) and 96-120 (CSRD…LLKC). Disordered regions lie at residues 131–150 (REDG…QISE) and 162–198 (FEEE…TLSS). Basic and acidic residues predominate over residues 165–177 (EANHWSNHGDSDH). The tract at residues 172–252 (HGDSDHSSPG…RSLDPQSYSL (81 aa)) is sufficient for interaction with UIMC1. Positions 178 to 198 (SSPGNRASESNQPSPGSTLSS) are enriched in polar residues. Residues 248–479 (QSYSLIHQLV…HSCKTSVGKE (232 aa)) form the NR LBD domain.

The protein belongs to the nuclear hormone receptor family. NR6 subfamily. Homodimer. Interacts with UIMC1.

It is found in the nucleus. In terms of biological role, orphan nuclear receptor that binds to a response element containing the sequence 5'-TCAAGGTCA-3'. Acts as a regulator of embryonic stem cell pluripotency by mediating repression of POU5F1/OCT4: binds to the DR0 element within the POU5F1/OCT4 promoter and inhibits POU5F1/OCT4 expression during embryonic stem cell differentiation. Involved in the regulation of gene expression in germ cell development during gametogenesis. The protein is Nuclear receptor subfamily 6 group A member 1 (NR6A1) of Sus scrofa (Pig).